Here is a 183-residue protein sequence, read N- to C-terminus: Putative manganese efflux pump MntP (183 aa).

6 consecutive transmembrane segments (helical) span residues 3–23 (TISVLITALALSMDAMSLSIY), 43–63 (TFGIFQFAMALVGSLSGILFI), 66–86 (ISLYSKYVSFAIFLFLGLMML), 107–127 (LIIMGIATSLDALLVGLTFSI), 134–154 (FLYTVEIGVITAIIAGLGFIL), and 161–181 (ILGQKSHFLGAALLIFISINI).

Belongs to the MntP (TC 9.B.29) family.

The protein localises to the cell inner membrane. Its function is as follows. Probably functions as a manganese efflux pump. The sequence is that of Putative manganese efflux pump MntP from Fusobacterium nucleatum subsp. nucleatum (strain ATCC 25586 / DSM 15643 / BCRC 10681 / CIP 101130 / JCM 8532 / KCTC 2640 / LMG 13131 / VPI 4355).